Reading from the N-terminus, the 180-residue chain is Shikimate kinase (180 aa).

G14–S19 is a binding site for ATP. S18 is a Mg(2+) binding site. Substrate-binding residues include D36, R60, and G82. Residue R120 coordinates ATP. R139 lines the substrate pocket.

Belongs to the shikimate kinase family. As to quaternary structure, monomer. The cofactor is Mg(2+).

The protein resides in the cytoplasm. The catalysed reaction is shikimate + ATP = 3-phosphoshikimate + ADP + H(+). It participates in metabolic intermediate biosynthesis; chorismate biosynthesis; chorismate from D-erythrose 4-phosphate and phosphoenolpyruvate: step 5/7. In terms of biological role, catalyzes the specific phosphorylation of the 3-hydroxyl group of shikimic acid using ATP as a cosubstrate. The polypeptide is Shikimate kinase (Xylella fastidiosa (strain 9a5c)).